A 190-amino-acid chain; its full sequence is Segregation and condensation protein B (190 aa).

Belongs to the ScpB family. As to quaternary structure, homodimer. Homodimerization may be required to stabilize the binding of ScpA to the Smc head domains. Component of a cohesin-like complex composed of ScpA, ScpB and the Smc homodimer, in which ScpA and ScpB bind to the head domain of Smc. The presence of the three proteins is required for the association of the complex with DNA.

It localises to the cytoplasm. In terms of biological role, participates in chromosomal partition during cell division. May act via the formation of a condensin-like complex containing Smc and ScpA that pull DNA away from mid-cell into both cell halves. This is Segregation and condensation protein B from Bacillus mycoides (strain KBAB4) (Bacillus weihenstephanensis).